The following is a 205-amino-acid chain: Small ribosomal subunit protein uS4 (205 aa).

Residues 18 to 46 are disordered; that stretch reads NIWGRPKSPVNRREYGPGQHGQRRKGKLS. One can recognise an S4 RNA-binding domain in the interval 94-157; that stretch reads RRLDTVVYRS…KQLAIVLEAN (64 aa).

It belongs to the universal ribosomal protein uS4 family. As to quaternary structure, part of the 30S ribosomal subunit. Contacts protein S5. The interaction surface between S4 and S5 is involved in control of translational fidelity.

Functionally, one of the primary rRNA binding proteins, it binds directly to 16S rRNA where it nucleates assembly of the body of the 30S subunit. With S5 and S12 plays an important role in translational accuracy. The sequence is that of Small ribosomal subunit protein uS4 from Rhodopseudomonas palustris (strain BisB5).